Reading from the N-terminus, the 289-residue chain is Phosphatidylglycerol--prolipoprotein diacylglyceryl transferase (289 aa).

7 helical membrane passes run 23 to 43 (ALHW…WLAV), 61 to 81 (LLYM…VLFY), 99 to 119 (GGMS…WFAH), 125 to 145 (FFQV…AGRL), 199 to 219 (SQLY…NLFI), 226 to 246 (GSVS…TEFF), and 259 to 279 (LFSM…LMMV). R144 is an a 1,2-diacyl-sn-glycero-3-phospho-(1'-sn-glycerol) binding site.

Belongs to the Lgt family.

The protein resides in the cell inner membrane. It catalyses the reaction L-cysteinyl-[prolipoprotein] + a 1,2-diacyl-sn-glycero-3-phospho-(1'-sn-glycerol) = an S-1,2-diacyl-sn-glyceryl-L-cysteinyl-[prolipoprotein] + sn-glycerol 1-phosphate + H(+). The protein operates within protein modification; lipoprotein biosynthesis (diacylglyceryl transfer). Its function is as follows. Catalyzes the transfer of the diacylglyceryl group from phosphatidylglycerol to the sulfhydryl group of the N-terminal cysteine of a prolipoprotein, the first step in the formation of mature lipoproteins. The polypeptide is Phosphatidylglycerol--prolipoprotein diacylglyceryl transferase (Pectobacterium atrosepticum (strain SCRI 1043 / ATCC BAA-672) (Erwinia carotovora subsp. atroseptica)).